We begin with the raw amino-acid sequence, 648 residues long: Chaperone protein DnaK (648 aa).

Position 200 is a phosphothreonine; by autocatalysis (Thr-200). The disordered stretch occupies residues 612 to 631 (QAGAAGAAGAAEGAAQGGAQ).

This sequence belongs to the heat shock protein 70 family.

In terms of biological role, acts as a chaperone. The sequence is that of Chaperone protein DnaK from Burkholderia multivorans (strain ATCC 17616 / 249).